The following is a 471-amino-acid chain: DnaJ protein P58IPK homolog B (471 aa).

The signal sequence occupies residues 1–24 (MARWPWRWRVLLPLLLLHSSPVFA). TPR repeat units lie at residues 32–65 (PSTLFKRASEMMNLRKYDGSLGLLNAVLEVDPNH), 66–99 (SEAYRQRASVLRHKCRYKEAEGDYSKYLELKPGS), 112–146 (AQNALESAYGQFESHDFSKVLEYINKIVLVFSPNC), 148–180 (KAKLLKAKALLALEDYSSVISETGFILKEDEDN), 181–214 (LDALLLRGRAYYYLADHDVASRHYQKGLRLDPEH), 227–260 (LLKKTKSAEDNAAKGKLRVSAEDYKAALAMDPDH), 265–298 (VHLYLGLCKVLVKLGRGKEAISSCTEALNIDGEL), and 300–332 (DALTQRGEAKLLTEDWEGAVQDLKEASQKSPQD). The N-linked (GlcNAc...) asparagine glycan is linked to Asn64. Positions 353–419 (DWYKILGISK…DKRVRYDRGE (67 aa)) constitute a J domain.

Interacts with BIP1.

The protein resides in the endoplasmic reticulum lumen. Its function is as follows. May play a role in protein folding in the endoplasmic reticulum. In Oryza sativa subsp. japonica (Rice), this protein is DnaJ protein P58IPK homolog B.